We begin with the raw amino-acid sequence, 141 residues long: Hemoglobin subunit alpha (141 aa).

Positions 1 to 141 constitute a Globin domain; the sequence is VLSDEDKTNV…VSTVLTSKYR (141 aa). The residue at position 3 (Ser-3) is a Phosphoserine. Lys-7 bears the N6-succinyllysine mark. Thr-8 is subject to Phosphothreonine. Lys-11 is subject to N6-succinyllysine. Residue Lys-16 is modified to N6-acetyllysine; alternate. Residue Lys-16 is modified to N6-succinyllysine; alternate. Residue Tyr-24 is modified to Phosphotyrosine. Ser-35 is modified (phosphoserine). Position 40 is an N6-succinyllysine (Lys-40). Residue Ser-49 is modified to Phosphoserine. His-58 contacts O2. His-87 is a binding site for heme b. A Phosphoserine modification is found at Ser-102. Residue Thr-108 is modified to Phosphothreonine. Phosphoserine occurs at positions 124 and 131. A phosphothreonine mark is found at Thr-134 and Thr-137. The residue at position 138 (Ser-138) is a Phosphoserine.

This sequence belongs to the globin family. As to quaternary structure, heterotetramer of two alpha chains and two beta chains. In terms of tissue distribution, red blood cells.

In terms of biological role, involved in oxygen transport from the lung to the various peripheral tissues. Functionally, hemopressin acts as an antagonist peptide of the cannabinoid receptor CNR1. Hemopressin-binding efficiently blocks cannabinoid receptor CNR1 and subsequent signaling. The sequence is that of Hemoglobin subunit alpha (HBA) from Trichechus inunguis (Amazon manatee).